The primary structure comprises 382 residues: Protein arginine N-methyltransferase 2 (382 aa).

ANK repeat units follow at residues 22–46 and 48–80; these read AAQT…FQDD and LGWS…AVDK. The RMT2 domain occupies 134–382; the sequence is KTSAGDNLVF…RLPIAKMSLI (249 aa). Residues Phe-143, Met-177, 205–210, 228–230, 255–256, and Asp-284 contribute to the S-adenosyl-L-methionine site; these read FGLGIV, EAH, and WQ.

It belongs to the class I-like SAM-binding methyltransferase superfamily. RMT2 methyltransferase family. As to quaternary structure, monomer.

It localises to the cytoplasm. The protein localises to the nucleus. Its function is as follows. S-adenosyl-L-methionine-dependent protein-arginine N-methyltransferase that methylates the delta-nitrogen atom of arginine residues to form N5-methylarginine (type IV) in target proteins. Monomethylates ribosomal protein L12. The polypeptide is Protein arginine N-methyltransferase 2 (Cryptococcus neoformans var. neoformans serotype D (strain JEC21 / ATCC MYA-565) (Filobasidiella neoformans)).